A 390-amino-acid polypeptide reads, in one-letter code: GTPase Obg (390 aa).

Residues 1 to 159 enclose the Obg domain; it reads MKFVDEASIL…RDLMLELMLL (159 aa). The disordered stretch occupies residues 127-147; that stretch reads NTRFKSSVNRTPRQKTMGTPG. The span at 129 to 143 shows a compositional bias: polar residues; the sequence is RFKSSVNRTPRQKTM. The OBG-type G domain maps to 160–333; it reads ADVGMLGMPN…LCWDVMTFII (174 aa). Residues 166–173, 191–195, 213–216, 283–286, and 314–316 each bind GTP; these read GMPNAGKS, FTTLV, DIPG, NKID, and SAA. 2 residues coordinate Mg(2+): Ser-173 and Thr-193.

It belongs to the TRAFAC class OBG-HflX-like GTPase superfamily. OBG GTPase family. In terms of assembly, monomer. It depends on Mg(2+) as a cofactor.

It localises to the cytoplasm. Functionally, an essential GTPase which binds GTP, GDP and possibly (p)ppGpp with moderate affinity, with high nucleotide exchange rates and a fairly low GTP hydrolysis rate. Plays a role in control of the cell cycle, stress response, ribosome biogenesis and in those bacteria that undergo differentiation, in morphogenesis control. This is GTPase Obg from Citrobacter koseri (strain ATCC BAA-895 / CDC 4225-83 / SGSC4696).